A 482-amino-acid chain; its full sequence is uncharacterized protein (482 aa).

Composition is skewed to low complexity over residues S24–Q86 and T312–I339. 2 disordered regions span residues S24 to Y88 and L307 to K376. Positions E342 to S363 are enriched in acidic residues.

This is an uncharacterized protein from Dictyostelium discoideum (Social amoeba).